A 729-amino-acid chain; its full sequence is Fatty acid oxidation complex subunit alpha (729 aa).

The segment at 1–189 (MLYKGDTLYL…KIGLVDGVVA (189 aa)) is enoyl-CoA hydratase/isomerase. D296 is a binding site for substrate. The tract at residues 311–729 (ETPKHAAVLG…ARPVGALKTA (419 aa)) is 3-hydroxyacyl-CoA dehydrogenase. NAD(+) contacts are provided by residues M324, D343, 400–402 (VVE), K407, and S429. The For 3-hydroxyacyl-CoA dehydrogenase activity role is filled by H450. N453 contacts NAD(+). Substrate contacts are provided by N500 and Y660.

In the N-terminal section; belongs to the enoyl-CoA hydratase/isomerase family. The protein in the C-terminal section; belongs to the 3-hydroxyacyl-CoA dehydrogenase family. In terms of assembly, heterotetramer of two alpha chains (FadB) and two beta chains (FadA).

It catalyses the reaction a (3S)-3-hydroxyacyl-CoA + NAD(+) = a 3-oxoacyl-CoA + NADH + H(+). The catalysed reaction is a (3S)-3-hydroxyacyl-CoA = a (2E)-enoyl-CoA + H2O. The enzyme catalyses a 4-saturated-(3S)-3-hydroxyacyl-CoA = a (3E)-enoyl-CoA + H2O. It carries out the reaction (3S)-3-hydroxybutanoyl-CoA = (3R)-3-hydroxybutanoyl-CoA. It catalyses the reaction a (3Z)-enoyl-CoA = a 4-saturated (2E)-enoyl-CoA. The catalysed reaction is a (3E)-enoyl-CoA = a 4-saturated (2E)-enoyl-CoA. It participates in lipid metabolism; fatty acid beta-oxidation. In terms of biological role, involved in the aerobic and anaerobic degradation of long-chain fatty acids via beta-oxidation cycle. Catalyzes the formation of 3-oxoacyl-CoA from enoyl-CoA via L-3-hydroxyacyl-CoA. It can also use D-3-hydroxyacyl-CoA and cis-3-enoyl-CoA as substrate. The protein is Fatty acid oxidation complex subunit alpha of Klebsiella pneumoniae subsp. pneumoniae (strain ATCC 700721 / MGH 78578).